A 390-amino-acid chain; its full sequence is Chorismate synthase (390 aa).

NADP(+) contacts are provided by Arg39 and Arg45. FMN is bound by residues 132 to 134 (RSS), 253 to 254 (NA), Gly298, 313 to 317 (KPIPT), and Arg339.

It belongs to the chorismate synthase family. Homotetramer. FMNH2 serves as cofactor.

The catalysed reaction is 5-O-(1-carboxyvinyl)-3-phosphoshikimate = chorismate + phosphate. Its pathway is metabolic intermediate biosynthesis; chorismate biosynthesis; chorismate from D-erythrose 4-phosphate and phosphoenolpyruvate: step 7/7. Its function is as follows. Catalyzes the anti-1,4-elimination of the C-3 phosphate and the C-6 proR hydrogen from 5-enolpyruvylshikimate-3-phosphate (EPSP) to yield chorismate, which is the branch point compound that serves as the starting substrate for the three terminal pathways of aromatic amino acid biosynthesis. This reaction introduces a second double bond into the aromatic ring system. The polypeptide is Chorismate synthase (Bacillus pumilus (strain SAFR-032)).